Consider the following 205-residue polypeptide: Protein GrpE (205 aa).

The disordered stretch occupies residues 1–40 (MSRKLHEEELTPEGMDAAQNADPAGDPVSENEGALPAAEP).

The protein belongs to the GrpE family. Homodimer.

It is found in the cytoplasm. Participates actively in the response to hyperosmotic and heat shock by preventing the aggregation of stress-denatured proteins, in association with DnaK and GrpE. It is the nucleotide exchange factor for DnaK and may function as a thermosensor. Unfolded proteins bind initially to DnaJ; upon interaction with the DnaJ-bound protein, DnaK hydrolyzes its bound ATP, resulting in the formation of a stable complex. GrpE releases ADP from DnaK; ATP binding to DnaK triggers the release of the substrate protein, thus completing the reaction cycle. Several rounds of ATP-dependent interactions between DnaJ, DnaK and GrpE are required for fully efficient folding. This is Protein GrpE from Acidobacterium capsulatum (strain ATCC 51196 / DSM 11244 / BCRC 80197 / JCM 7670 / NBRC 15755 / NCIMB 13165 / 161).